We begin with the raw amino-acid sequence, 311 residues long: Malate dehydrogenase (311 aa).

NAD(+)-binding positions include 7-13 and Asp-34; that span reads GAAGGIG. Arg-81 and Arg-87 together coordinate substrate. Residues Asn-94 and 117-119 contribute to the NAD(+) site; that span reads ITN. Substrate-binding residues include Asn-119 and Arg-153. The Proton acceptor role is filled by His-177. An NAD(+)-binding site is contributed by Met-227.

The protein belongs to the LDH/MDH superfamily. MDH type 1 family. Homodimer.

The enzyme catalyses (S)-malate + NAD(+) = oxaloacetate + NADH + H(+). In terms of biological role, catalyzes the reversible oxidation of malate to oxaloacetate. This Shewanella woodyi (strain ATCC 51908 / MS32) protein is Malate dehydrogenase.